The sequence spans 189 residues: Testis-expressed protein 22 (189 aa).

The segment at 1 to 120 (MDSRQQRPQR…TQSVPTPPLQ (120 aa)) is disordered. Over residues 14–24 (QWQLAQEQRQQ) the composition is skewed to low complexity. Positions 70 to 87 (IDERRRLALQRMQERTDT) are enriched in basic and acidic residues. Positions 103–114 (QQTETSPSTQSV) are enriched in low complexity.

As to expression, mainly expressed in spermatocytes and spermatids in testis.

It localises to the cytoplasm. The protein localises to the cytoplasmic vesicle. Its subcellular location is the secretory vesicle. It is found in the acrosome. The protein is Testis-expressed protein 22 (Tex22) of Mus musculus (Mouse).